A 433-amino-acid chain; its full sequence is ATP-dependent protease ATPase subunit HslU (433 aa).

ATP contacts are provided by residues Ile18, Gly60 to Glu65, Asp246, Glu311, and Arg383.

It belongs to the ClpX chaperone family. HslU subfamily. As to quaternary structure, a double ring-shaped homohexamer of HslV is capped on each side by a ring-shaped HslU homohexamer. The assembly of the HslU/HslV complex is dependent on binding of ATP.

It localises to the cytoplasm. Functionally, ATPase subunit of a proteasome-like degradation complex; this subunit has chaperone activity. The binding of ATP and its subsequent hydrolysis by HslU are essential for unfolding of protein substrates subsequently hydrolyzed by HslV. HslU recognizes the N-terminal part of its protein substrates and unfolds these before they are guided to HslV for hydrolysis. The polypeptide is ATP-dependent protease ATPase subunit HslU (Cereibacter sphaeroides (strain ATCC 17029 / ATH 2.4.9) (Rhodobacter sphaeroides)).